A 482-amino-acid chain; its full sequence is Transcription factor Sox-9 (482 aa).

Disordered stretches follow at residues 1–66 (MNLL…ETED) and 160–274 (RLRI…FRDV). Positions 30–41 (SAGSPCPSGSGS) are enriched in low complexity. The span at 42-52 (DTENTRPQENT) shows a compositional bias: polar residues. 2 stretches are compositionally biased toward basic and acidic residues: residues 56–66 (GDPELKKETED) and 160–174 (RLRIQHKKDHPDYKY). A Glycyl lysine isopeptide (Lys-Gly) (interchain with G-Cter in SUMO) cross-link involves residue lysine 61. Residues 63-103 (ETEDEKFPVCIREAVSQVLKGYDWTLVPMPVRVNGSSKSKP) form a dimerization (DIM) region. Residues 63–103 (ETEDEKFPVCIREAVSQVLKGYDWTLVPMPVRVNGSSKSKP) form a PQA region. The segment at residues 105 to 173 (VKRPMNAFMV…QHKKDHPDYK (69 aa)) is a DNA-binding region (HMG box). A compositionally biased stretch (polar residues) spans 211–220 (SPHSASSMSE). The segment at 224 to 308 (PGEHSGQSQG…LPPNGHPGVG (85 aa)) is transactivation domain (TAM). 2 short sequence motifs (9aaTAD) span residues 276–285 (IGELSSEVIS) and 291–299 (DVNEFDQYL). Positions 295–395 (FDQYLPPNGH…HSPQQLNYSS (101 aa)) are disordered. Polar residues-rich tracts occupy residues 308 to 326 (GSTQAPYTGSYGINSTPSA) and 351 to 366 (HSLSTINSEQSQSQQR). Positions 366-482 (RTHIKTEQLS…QPVYTQLTRP (117 aa)) are transactivation domain (TAC). Lysine 370 participates in a covalent cross-link: Glycyl lysine isopeptide (Lys-Gly) (interchain with G-Cter in SUMO). Over residues 375–390 (SPSHYSDQQQQHSPQQ) the composition is skewed to low complexity. The short motif at 433-441 (SGLYSNFSY) is the 9aaTAD 3 element. Positions 448–482 (PMYTPIADTTGVPSIPQTHSPQHWEQPVYTQLTRP) are disordered. Residues 458–482 (GVPSIPQTHSPQHWEQPVYTQLTRP) are compositionally biased toward polar residues.

In terms of assembly, interacts with the sumoylation factors ube2i/ubc9 and sumo1. In terms of processing, sumoylated. Lys-370 is the major site of sumoylation, although sumoylation at Lys-61 also occurs. Sumoylation plays a key role in regulating formation of the neural crest and otic placode. Expressed in both male and female gonads from after metamorphosis through to adult stages. In the testis, expression is restricted to the supporting Sertoli-like cells. Conversely in the ovary, expression is localized to primary oocytes (at protein level). In developing limbs, expressed before chrondrocytes form (stage 52 tadpoles) and throughout the cartilaginous anlagen until stage 56, after which expression ceases in the enlarged cells of the diaphysis. At later stages, expression continues in the chondrocytes of the epiphysis and metaphysis, and weak expression is seen in most of the diaphysis.

Its subcellular location is the nucleus. It is found in the cytoplasm. Transcription factor that plays a key role in chondrocytes differentiation and skeletal development. Specifically binds the 5'-ACAAAG-3' DNA motif present in enhancers and super-enhancers and promotes expression of genes important for chondrogenesis, including COL2A1. Plays a central role in successive steps of chondrocyte differentiation. Absolutely required for precartilaginous condensation, the first step in chondrogenesis during which skeletal progenitors differentiate into prechondrocytes. Together with SOX5 and SOX6, required for overt chondrogenesis when condensed prechondrocytes differentiate into early stage chondrocytes, the second step in chondrogenesis. Later, required to direct hypertrophic maturation and block osteoblast differentiation of growth plate chondrocytes: maintains chondrocyte columnar proliferation, delays prehypertrophy and then prevents osteoblastic differentiation of chondrocytes. Also required for chondrocyte hypertrophy, both indirectly, by keeping the lineage fate of chondrocytes, and directly, by remaining present in upper hypertrophic cells. Low lipid levels are the main nutritional determinant for chondrogenic commitment of skeletal progenitor cells: when lipids levels are low, FOXO transcription factors promote expression of SOX9, which induces chondrogenic commitment and suppresses fatty acid oxidation. In addition to cartilage development, also acts as a regulator of proliferation and differentiation in epithelial stem/progenitor cells. Unlikely to play a role in sex determination but may function during testicular and ovarian differentiation. The sequence is that of Transcription factor Sox-9 from Xenopus tropicalis (Western clawed frog).